Here is a 338-residue protein sequence, read N- to C-terminus: Glycerol-3-phosphate dehydrogenase [NAD(P)+] (338 aa).

S14, Y15, H35, and K109 together coordinate NADPH. Residues K109, G138, and T140 each contribute to the sn-glycerol 3-phosphate site. Position 142 (A142) interacts with NADPH. The sn-glycerol 3-phosphate site is built by K194, D247, S257, R258, and N259. K194 acts as the Proton acceptor in catalysis. R258 lines the NADPH pocket. Residues V282 and E284 each coordinate NADPH.

Belongs to the NAD-dependent glycerol-3-phosphate dehydrogenase family.

Its subcellular location is the cytoplasm. It catalyses the reaction sn-glycerol 3-phosphate + NAD(+) = dihydroxyacetone phosphate + NADH + H(+). The enzyme catalyses sn-glycerol 3-phosphate + NADP(+) = dihydroxyacetone phosphate + NADPH + H(+). It participates in membrane lipid metabolism; glycerophospholipid metabolism. Functionally, catalyzes the reduction of the glycolytic intermediate dihydroxyacetone phosphate (DHAP) to sn-glycerol 3-phosphate (G3P), the key precursor for phospholipid synthesis. The protein is Glycerol-3-phosphate dehydrogenase [NAD(P)+] of Shewanella sp. (strain MR-4).